The primary structure comprises 355 residues: Uroporphyrinogen decarboxylase (355 aa).

Residues 27 to 31 (RQAGR), aspartate 78, tyrosine 155, serine 210, and histidine 328 contribute to the substrate site.

This sequence belongs to the uroporphyrinogen decarboxylase family. As to quaternary structure, homodimer.

It is found in the cytoplasm. The enzyme catalyses uroporphyrinogen III + 4 H(+) = coproporphyrinogen III + 4 CO2. The protein operates within porphyrin-containing compound metabolism; protoporphyrin-IX biosynthesis; coproporphyrinogen-III from 5-aminolevulinate: step 4/4. Catalyzes the decarboxylation of four acetate groups of uroporphyrinogen-III to yield coproporphyrinogen-III. In Ectopseudomonas mendocina (strain ymp) (Pseudomonas mendocina), this protein is Uroporphyrinogen decarboxylase.